Consider the following 233-residue polypeptide: Lipoprotein-releasing system ATP-binding protein LolD (233 aa).

The ABC transporter domain occupies 6–233 (LQCDNLCKRY…TAELSLMGAE (228 aa)). 42-49 (GSSGSGKS) is a binding site for ATP.

The protein belongs to the ABC transporter superfamily. Lipoprotein translocase (TC 3.A.1.125) family. In terms of assembly, the complex is composed of two ATP-binding proteins (LolD) and two transmembrane proteins (LolC and LolE).

The protein localises to the cell inner membrane. Part of the ABC transporter complex LolCDE involved in the translocation of mature outer membrane-directed lipoproteins, from the inner membrane to the periplasmic chaperone, LolA. Responsible for the formation of the LolA-lipoprotein complex in an ATP-dependent manner. The protein is Lipoprotein-releasing system ATP-binding protein LolD of Salmonella paratyphi A (strain ATCC 9150 / SARB42).